Here is a 306-residue protein sequence, read N- to C-terminus: tRNA dimethylallyltransferase (306 aa).

14–21 (GPTAAGKS) provides a ligand contact to ATP. 16 to 21 (TAAGKS) serves as a coordination point for substrate. The tract at residues 39-42 (DSRL) is interaction with substrate tRNA.

The protein belongs to the IPP transferase family. Monomer. The cofactor is Mg(2+).

It carries out the reaction adenosine(37) in tRNA + dimethylallyl diphosphate = N(6)-dimethylallyladenosine(37) in tRNA + diphosphate. Catalyzes the transfer of a dimethylallyl group onto the adenine at position 37 in tRNAs that read codons beginning with uridine, leading to the formation of N6-(dimethylallyl)adenosine (i(6)A). The protein is tRNA dimethylallyltransferase of Synechococcus elongatus (strain ATCC 33912 / PCC 7942 / FACHB-805) (Anacystis nidulans R2).